Reading from the N-terminus, the 185-residue chain is piRNA-mediated silencing protein C19orf84 homolog (185 aa).

2 disordered regions span residues 1 to 38 (MDEL…PSLL) and 93 to 185 (HIWP…EADY). Over residues 11–25 (NGDNLSLPSAGTESW) the composition is skewed to polar residues. The segment covering 26-38 (PTSATPGLPPSLL) has biased composition (low complexity). Residues 118–130 (RPSRGWGRGRGRG) are compositionally biased toward basic residues. Basic and acidic residues predominate over residues 139–150 (GPERAEERERNM).

Interacts with SPOCD1.

The protein localises to the nucleus. It is found in the nucleoplasm. Protein adapter involved in piRNA-directed transposon methylation by connecting PIWIL4-piRNA and DNA methylation machineries. The PIWIL4-piRNA pathway plays a central role during spermatogenesis by directing transposon DNA methylation and silencing, thereby preventing their mobilization, which is essential for the germline integrity. The chain is piRNA-mediated silencing protein C19orf84 homolog from Mus musculus (Mouse).